We begin with the raw amino-acid sequence, 312 residues long: Bifunctional pinoresinol-lariciresinol reductase 1 (312 aa).

Residues 10 to 16 (GGTGYIG), R35, and K44 each bind NADP(+). The Proton acceptor role is filled by K136. Residue R140 coordinates NADP(+). H268 is a binding site for substrate.

This sequence belongs to the NmrA-type oxidoreductase family. Isoflavone reductase subfamily. Dimer. In terms of tissue distribution, expressed in seeds and roots, but not in stems. Detected in leaves.

It catalyses the reaction (-)-lariciresinol + NADP(+) = (-)-pinoresinol + NADPH + H(+). The catalysed reaction is (+)-secoisolariciresinol + NADP(+) = (-)-lariciresinol + NADPH + H(+). Reductase involved in lignan biosynthesis. Catalyzes the enantioselective conversion of (-)-pinoresinol into (-)-lariciresinol and of (-)-lariciresinol into (+)-secoisolariciresinol. Abstracts the 4R-hydride from the NADPH cofactor during catalysis. This is Bifunctional pinoresinol-lariciresinol reductase 1 (PLR_Lu1) from Linum usitatissimum (Flax).